Consider the following 388-residue polypeptide: Leucine aminopeptidase 1 (388 aa).

The signal sequence occupies residues 1–19 (MRSSVLFSLYAATLVAAVA). A propeptide spanning residues 20-88 (HPKDPQIVLQ…TLNHKLSTES (69 aa)) is cleaved from the precursor. A glycan (N-linked (GlcNAc...) asparagine) is linked at N98. Zn(2+) is bound by residues H187, D206, E245, and D272. C321 and C325 are oxidised to a cystine. Zn(2+) is bound at residue H354.

It belongs to the peptidase M28 family. M28E subfamily. Monomer. Requires Zn(2+) as cofactor.

It is found in the secreted. Extracellular aminopeptidase that allows assimilation of proteinaceous substrates. The polypeptide is Leucine aminopeptidase 1 (LAP1) (Leptosphaeria maculans (strain JN3 / isolate v23.1.3 / race Av1-4-5-6-7-8) (Blackleg fungus)).